A 550-amino-acid chain; its full sequence is Cochlin (550 aa).

Positions 1-24 are cleaved as a signal peptide; the sequence is MWASWIPVLCLGVCLLLPPEPVGS. Positions 28-121 constitute an LCCL domain; sequence VPIPITCSTR…QMLSRWSASF (94 aa). 2 cysteine pairs are disulfide-bonded: cysteine 34/cysteine 50 and cysteine 54/cysteine 74. Asparagine 100 carries N-linked (GlcNAc...) asparagine glycosylation. Residues 128 to 139 show a composition bias toward polar residues; sequence SGTQEATGQAVS. Positions 128–158 are disordered; the sequence is SGTQEATGQAVSTAHPATGKRLKKTPEKKTG. VWFA domains are found at residues 165–350 and 367–537; these read DIAF…VQKL and NIAF…VSDV. N-linked (GlcNAc...) asparagine glycosylation is found at asparagine 221 and asparagine 436.

As to quaternary structure, monomer. May form homodimer. Interacts with type II collagen. Interacts with SLC44A2. Interacts with ANXA2. N-glycosylated.

It localises to the secreted. The protein localises to the extracellular space. Its function is as follows. Plays a role in the control of cell shape and motility in the trabecular meshwork. This is Cochlin (COCH) from Bos taurus (Bovine).